Here is a 142-residue protein sequence, read N- to C-terminus: Large ribosomal subunit protein uL11 (142 aa).

Belongs to the universal ribosomal protein uL11 family. As to quaternary structure, part of the ribosomal stalk of the 50S ribosomal subunit. Interacts with L10 and the large rRNA to form the base of the stalk. L10 forms an elongated spine to which L12 dimers bind in a sequential fashion forming a multimeric L10(L12)X complex. Post-translationally, one or more lysine residues are methylated.

In terms of biological role, forms part of the ribosomal stalk which helps the ribosome interact with GTP-bound translation factors. The sequence is that of Large ribosomal subunit protein uL11 from Mycobacterium sp. (strain MCS).